The sequence spans 384 residues: Shufflon-specific DNA recombinase (384 aa).

Positions 9 to 96 constitute a Core-binding (CB) domain; that stretch reads MSLSRALDKY…LLSSLFNIAR (88 aa). In terms of domain architecture, Tyr recombinase spans 118–284; that stretch reads GRDRRLTSSE…RAWQLVSKLD (167 aa). Residues Arg155, Lys180, His235, Arg238, and His262 contribute to the active site. Tyr271 acts as the O-(3'-phospho-DNA)-tyrosine intermediate in catalysis.

It belongs to the 'phage' integrase family.

Its function is as follows. Shufflon-specific DNA recombinase. This Escherichia coli protein is Shufflon-specific DNA recombinase (rci).